Reading from the N-terminus, the 219-residue chain is Type-5 uracil-DNA glycosylase (219 aa).

The [4Fe-4S] cluster site is built by Cys-13, Cys-16, Cys-115, and Cys-130.

The protein belongs to the uracil-DNA glycosylase (UDG) superfamily. Type 5 (UDGb) family.

Its function is as follows. DNA glycosylase with broad substrate specificity. Can remove uracil from double-stranded DNA containing either a U/G, U/A, U/C or U/T base pair. Can also excise hypoxanthine from double-stranded DNA containing G/I, T/I, and A/I base pairs, xanthine from both double-stranded and single stranded DNA, thymine from G/T mismatched DNA, 5'-hydroxymethyluracil and 5'-fluorouracil. This chain is Type-5 uracil-DNA glycosylase, found in Thermus thermophilus (strain ATCC 27634 / DSM 579 / HB8).